The following is a 108-amino-acid chain: uncharacterized protein (108 aa).

The interval 81 to 108 (FKCLDSPPPVPPSSSQGEDEENTVDSQY) is disordered. A compositionally biased stretch (acidic residues) spans 97-108 (GEDEENTVDSQY).

This is an uncharacterized protein from Saccharomyces cerevisiae (strain ATCC 204508 / S288c) (Baker's yeast).